Consider the following 796-residue polypeptide: AUGMIN subunit 5 (796 aa).

Residues 79–120 form a disordered region; the sequence is HGGSSNASIGSSVNPGKEESKSKGRRKDKTVTGESSSYAEDR. Polar residues predominate over residues 80–92; that stretch reads GGSSNASIGSSVN. Coiled-coil stretches lie at residues 115–191 and 462–501; these read SYAE…EATR and GKEREAAGLRASLNTLLSEIQRLNKLCAERKEAEDSLKKK.

Belongs to the HAUS5 family. In terms of assembly, part of the augmin complex composed of 8 subunits. The complex acts on microtubules and interacts with gamma-tubulin in spindles and the phragmoplast.

It is found in the cytoplasm. Its subcellular location is the cytoskeleton. The protein localises to the spindle. It localises to the phragmoplast. Its function is as follows. Involved in microtubules reorganization during spindle and phragmoplast development. In Arabidopsis thaliana (Mouse-ear cress), this protein is AUGMIN subunit 5.